We begin with the raw amino-acid sequence, 224 residues long: ATP-dependent dethiobiotin synthetase BioD (224 aa).

Residue Thr18 coordinates Mg(2+). Residue Lys39 is part of the active site. A substrate-binding site is contributed by Ser43. Asp56 and Glu117 together coordinate Mg(2+). ATP is bound by residues Asp56, 117–120 (EGVG), and 177–178 (NE).

It belongs to the dethiobiotin synthetase family. In terms of assembly, homodimer. Mg(2+) is required as a cofactor.

The protein localises to the cytoplasm. The catalysed reaction is (7R,8S)-7,8-diammoniononanoate + CO2 + ATP = (4R,5S)-dethiobiotin + ADP + phosphate + 3 H(+). It participates in cofactor biosynthesis; biotin biosynthesis; biotin from 7,8-diaminononanoate: step 1/2. Catalyzes a mechanistically unusual reaction, the ATP-dependent insertion of CO2 between the N7 and N8 nitrogen atoms of 7,8-diaminopelargonic acid (DAPA, also called 7,8-diammoniononanoate) to form a ureido ring. The sequence is that of ATP-dependent dethiobiotin synthetase BioD from Xanthomonas oryzae pv. oryzae (strain MAFF 311018).